The chain runs to 408 residues: Peptidase T (408 aa).

H78 contributes to the Zn(2+) binding site. Residue D80 is part of the active site. D141 provides a ligand contact to Zn(2+). Catalysis depends on E175, which acts as the Proton acceptor. Zn(2+)-binding residues include E176, D198, and H380.

This sequence belongs to the peptidase M20B family. Zn(2+) is required as a cofactor.

The protein localises to the cytoplasm. It catalyses the reaction Release of the N-terminal residue from a tripeptide.. Cleaves the N-terminal amino acid of tripeptides. This is Peptidase T from Clostridium botulinum (strain 657 / Type Ba4).